Reading from the N-terminus, the 226-residue chain is 3-dehydroquinate dehydratase (226 aa).

3-dehydroquinate is bound by residues Ser-9, 32-34 (EVR), and Arg-59. His-119 serves as the catalytic Proton donor/acceptor. The active-site Schiff-base intermediate with substrate is the Lys-146. Residues Arg-187, Thr-208, and Gln-212 each coordinate 3-dehydroquinate.

Belongs to the type-I 3-dehydroquinase family. In terms of assembly, homodimer.

The catalysed reaction is 3-dehydroquinate = 3-dehydroshikimate + H2O. It participates in metabolic intermediate biosynthesis; chorismate biosynthesis; chorismate from D-erythrose 4-phosphate and phosphoenolpyruvate: step 3/7. Involved in the third step of the chorismate pathway, which leads to the biosynthesis of aromatic amino acids. Catalyzes the cis-dehydration of 3-dehydroquinate (DHQ) and introduces the first double bond of the aromatic ring to yield 3-dehydroshikimate. In Desulfotalea psychrophila (strain LSv54 / DSM 12343), this protein is 3-dehydroquinate dehydratase.